We begin with the raw amino-acid sequence, 448 residues long: uncharacterized protein (448 aa).

The Extracellular segment spans residues Met1–Lys50. Residues Ile51–Trp71 form a helical membrane-spanning segment. At Tyr72–Gly93 the chain is on the cytoplasmic side. A helical membrane pass occupies residues Leu94 to Ile114. Residues Ser115–Ala146 are Extracellular-facing. A helical transmembrane segment spans residues Ile147–Val167. Residues Asp168–Lys184 lie on the Cytoplasmic side of the membrane. Residues Leu185–Ser205 traverse the membrane as a helical segment. Residues Asp206–Lys260 are Extracellular-facing. The chain crosses the membrane as a helical span at residues Leu261–Val281. Topologically, residues Tyr282–Gln287 are cytoplasmic. Residues Phe288–Ser308 form a helical membrane-spanning segment. Residues Ser309 to Ser333 are Extracellular-facing. Residues Gly334 to Leu354 form a helical membrane-spanning segment. Over Asn355–Gly386 the chain is Cytoplasmic. Gly386–Thr393 contributes to the ATP binding site. The helical transmembrane segment at Val387–Ala407 threads the bilayer. The Extracellular segment spans residues Asn408–Tyr416. The chain crosses the membrane as a helical span at residues Ile417 to Val437. At Asp438–His448 the chain is on the cytoplasmic side.

The protein localises to the membrane. This is an uncharacterized protein from Saccharomyces cerevisiae (strain ATCC 204508 / S288c) (Baker's yeast).